We begin with the raw amino-acid sequence, 273 residues long: Dermonecrotic toxin LhSicTox-alphaIA2aii (273 aa).

Residue His-5 is part of the active site. 2 residues coordinate Mg(2+): Glu-25 and Asp-27. The Nucleophile role is filled by His-41. Cystine bridges form between Cys-45–Cys-51 and Cys-47–Cys-190. Position 85 (Asp-85) interacts with Mg(2+).

Belongs to the arthropod phospholipase D family. Class II subfamily. The cofactor is Mg(2+). In terms of tissue distribution, expressed by the venom gland.

It is found in the secreted. The enzyme catalyses an N-(acyl)-sphingosylphosphocholine = an N-(acyl)-sphingosyl-1,3-cyclic phosphate + choline. It carries out the reaction an N-(acyl)-sphingosylphosphoethanolamine = an N-(acyl)-sphingosyl-1,3-cyclic phosphate + ethanolamine. The catalysed reaction is a 1-acyl-sn-glycero-3-phosphocholine = a 1-acyl-sn-glycero-2,3-cyclic phosphate + choline. It catalyses the reaction a 1-acyl-sn-glycero-3-phosphoethanolamine = a 1-acyl-sn-glycero-2,3-cyclic phosphate + ethanolamine. In terms of biological role, dermonecrotic toxins cleave the phosphodiester linkage between the phosphate and headgroup of certain phospholipids (sphingolipid and lysolipid substrates), forming an alcohol (often choline) and a cyclic phosphate. This toxin acts on sphingomyelin (SM). It may also act on ceramide phosphoethanolamine (CPE), lysophosphatidylcholine (LPC) and lysophosphatidylethanolamine (LPE), but not on lysophosphatidylserine (LPS), and lysophosphatidylglycerol (LPG). It acts by transphosphatidylation, releasing exclusively cyclic phosphate products as second products. Induces dermonecrosis, hemolysis, increased vascular permeability, edema, inflammatory response, and platelet aggregation. In Loxosceles hirsuta (Recluse spider), this protein is Dermonecrotic toxin LhSicTox-alphaIA2aii.